The chain runs to 903 residues: Protein translocase subunit SecA (903 aa).

ATP is bound by residues Gln-87, 105-109 (GEGKT), and Asp-507. Residues 854-893 (STMADSSGDVKSSTAESKAPYVRDGRKVGRNEPCPCGSGK) form a disordered region. The span at 856 to 869 (MADSSGDVKSSTAE) shows a compositional bias: polar residues. The segment covering 874-883 (YVRDGRKVGR) has biased composition (basic and acidic residues). The Zn(2+) site is built by Cys-887, Cys-889, Cys-898, and His-899.

It belongs to the SecA family. Monomer and homodimer. Part of the essential Sec protein translocation apparatus which comprises SecA, SecYEG and auxiliary proteins SecDF-YajC and YidC. Zn(2+) serves as cofactor.

The protein resides in the cell inner membrane. It is found in the cytoplasm. It carries out the reaction ATP + H2O + cellular proteinSide 1 = ADP + phosphate + cellular proteinSide 2.. Its function is as follows. Part of the Sec protein translocase complex. Interacts with the SecYEG preprotein conducting channel. Has a central role in coupling the hydrolysis of ATP to the transfer of proteins into and across the cell membrane, serving both as a receptor for the preprotein-SecB complex and as an ATP-driven molecular motor driving the stepwise translocation of polypeptide chains across the membrane. This is Protein translocase subunit SecA from Nitrosococcus oceani (strain ATCC 19707 / BCRC 17464 / JCM 30415 / NCIMB 11848 / C-107).